The primary structure comprises 1216 residues: Tyrosine-protein kinase receptor ver-4 (1216 aa).

The Extracellular segment spans residues 1-789 (MRVSLTEFLV…VKVAGASSSS (789 aa)). Residues Asn-142, Asn-195, Asn-206, Asn-245, Asn-283, Asn-333, Asn-348, Asn-384, Asn-402, Asn-412, Asn-496, Asn-508, Asn-588, Asn-599, Asn-664, and Asn-703 are each glycosylated (N-linked (GlcNAc...) asparagine). 2 consecutive Ig-like C2-type domains span residues 596 to 691 (KSVN…TSIS) and 697 to 783 (PPFL…VKVA). Residues Cys-619 and Cys-675 are joined by a disulfide bond. Residues Cys-721 and Cys-765 are joined by a disulfide bond. Residues 790 to 810 (FFWLFITFFAFVVVGIVVSLL) traverse the membrane as a helical segment. Over 811 to 1216 (WKLFGQKDLK…WVQKPTQLFF (406 aa)) the chain is Cytoplasmic. One can recognise a Protein kinase domain in the interval 870 to 1181 (LEILETLGSG…IKLFKNHIQY (312 aa)). ATP is bound by residues 876–884 (LGSGQFGIV) and Lys-908. Catalysis depends on Asp-1042, which acts as the Proton acceptor.

It belongs to the protein kinase superfamily. Tyr protein kinase family.

The protein resides in the cell membrane. It catalyses the reaction L-tyrosyl-[protein] + ATP = O-phospho-L-tyrosyl-[protein] + ADP + H(+). Receptor tyrosine kinase which may be involved, downstream of pvf-1, in the positioning of ray 1, the most anterior ray sensillum in the male tail. The chain is Tyrosine-protein kinase receptor ver-4 from Caenorhabditis elegans.